A 1098-amino-acid chain; its full sequence is Gramicidin S synthase 1 (1098 aa).

Residues A538–K612 enclose the Carrier domain. The residue at position 573 (S573) is an O-(pantetheine 4'-phosphoryl)serine.

It belongs to the ATP-dependent AMP-binding enzyme family. As to quaternary structure, large multienzyme complex of GrsA and GrsB. The cofactor is pantetheine 4'-phosphate.

The catalysed reaction is L-phenylalanine + ATP + H2O = D-phenylalanine + AMP + diphosphate + H(+). Its pathway is antibiotic biosynthesis; gramicidin S biosynthesis. Functionally, in the first step of peptide synthesis this enzyme activates phenylalanine and racemizes it to the D-isomer. The sequence is that of Gramicidin S synthase 1 (grsA) from Brevibacillus brevis (Bacillus brevis).